The primary structure comprises 546 residues: Chaperonin GroEL (546 aa).

ATP is bound by residues 30–33, lysine 51, 87–91, glycine 415, 479–481, and aspartate 495; these read TLGP, DGTTT, and NAA.

It belongs to the chaperonin (HSP60) family. As to quaternary structure, forms a cylinder of 14 subunits composed of two heptameric rings stacked back-to-back. Interacts with the co-chaperonin GroES.

It is found in the cytoplasm. It catalyses the reaction ATP + H2O + a folded polypeptide = ADP + phosphate + an unfolded polypeptide.. Its function is as follows. Together with its co-chaperonin GroES, plays an essential role in assisting protein folding. The GroEL-GroES system forms a nano-cage that allows encapsulation of the non-native substrate proteins and provides a physical environment optimized to promote and accelerate protein folding. The chain is Chaperonin GroEL from Paraburkholderia phytofirmans (strain DSM 17436 / LMG 22146 / PsJN) (Burkholderia phytofirmans).